The primary structure comprises 128 residues: Large ribosomal subunit protein bL12 (128 aa).

The protein belongs to the bacterial ribosomal protein bL12 family. As to quaternary structure, homodimer. Part of the ribosomal stalk of the 50S ribosomal subunit. Forms a multimeric L10(L12)X complex, where L10 forms an elongated spine to which 2 to 4 L12 dimers bind in a sequential fashion. Binds GTP-bound translation factors.

Functionally, forms part of the ribosomal stalk which helps the ribosome interact with GTP-bound translation factors. Is thus essential for accurate translation. The sequence is that of Large ribosomal subunit protein bL12 from Acidithiobacillus ferrooxidans (strain ATCC 23270 / DSM 14882 / CIP 104768 / NCIMB 8455) (Ferrobacillus ferrooxidans (strain ATCC 23270)).